Reading from the N-terminus, the 135-residue chain is Transcription antitermination protein NusB (135 aa).

Belongs to the NusB family.

Functionally, involved in transcription antitermination. Required for transcription of ribosomal RNA (rRNA) genes. Binds specifically to the boxA antiterminator sequence of the ribosomal RNA (rrn) operons. The protein is Transcription antitermination protein NusB of Nocardioides sp. (strain ATCC BAA-499 / JS614).